Consider the following 451-residue polypeptide: Opioid growth factor receptor-like protein 1 (451 aa).

Disordered stretches follow at residues 1-89 and 308-451; these read MGNL…TAKP and ENFI…VLVQ. Positions 43 to 66 are enriched in low complexity; sequence PGQESEQPAQPPEQAGGRPGASPA. Over residues 322–341 the composition is skewed to polar residues; the sequence is GSKAQKMSSPLASSHNSQTS. Composition is skewed to basic and acidic residues over residues 362–381 and 389–399; these read TAED…DRPS and AKPRNTEKDSN. The span at 431 to 443 shows a compositional bias: low complexity; that stretch reads NDNQDNENPGNTN.

The protein belongs to the opioid growth factor receptor family. As to expression, ubiquitous.

This chain is Opioid growth factor receptor-like protein 1 (OGFRL1), found in Homo sapiens (Human).